Here is a 350-residue protein sequence, read N- to C-terminus: Chorismate synthase (350 aa).

R48 serves as a coordination point for NADP(+). FMN-binding positions include 125 to 127, G277, 292 to 296, and R318; these read RSS and KPIPS.

This sequence belongs to the chorismate synthase family. In terms of assembly, homotetramer. The cofactor is FMNH2.

The catalysed reaction is 5-O-(1-carboxyvinyl)-3-phosphoshikimate = chorismate + phosphate. It participates in metabolic intermediate biosynthesis; chorismate biosynthesis; chorismate from D-erythrose 4-phosphate and phosphoenolpyruvate: step 7/7. Its function is as follows. Catalyzes the anti-1,4-elimination of the C-3 phosphate and the C-6 proR hydrogen from 5-enolpyruvylshikimate-3-phosphate (EPSP) to yield chorismate, which is the branch point compound that serves as the starting substrate for the three terminal pathways of aromatic amino acid biosynthesis. This reaction introduces a second double bond into the aromatic ring system. In Maridesulfovibrio salexigens (strain ATCC 14822 / DSM 2638 / NCIMB 8403 / VKM B-1763) (Desulfovibrio salexigens), this protein is Chorismate synthase.